The sequence spans 236 residues: Ion-translocating oxidoreductase complex subunit E (236 aa).

6 helical membrane passes run alanine 18–alanine 38, leucine 39–leucine 59, isoleucine 69–alanine 89, phenylalanine 92–isoleucine 112, alanine 128–leucine 148, and proline 182–phenylalanine 202. The disordered stretch occupies residues arginine 217–alanine 236.

This sequence belongs to the NqrDE/RnfAE family. In terms of assembly, the complex is composed of six subunits: RnfA, RnfB, RnfC, RnfD, RnfE and RnfG.

The protein resides in the cell inner membrane. Part of a membrane-bound complex that couples electron transfer with translocation of ions across the membrane. The sequence is that of Ion-translocating oxidoreductase complex subunit E from Edwardsiella ictaluri (strain 93-146).